The primary structure comprises 384 residues: Protein V (384 aa).

Disordered stretches follow at residues 1–23 (MDQDAFILKEDSEVEREAPGGRE) and 38–317 (SEPT…TKKG). The segment covering 7-20 (ILKEDSEVEREAPG) has biased composition (basic and acidic residues). Over residues 50–59 (LHNTINTPQG) the composition is skewed to polar residues. S68 carries the post-translational modification Phosphoserine; by host. Basic and acidic residues predominate over residues 83-101 (RSGEESRVSGRTSKPEAEA). S125 is subject to Phosphoserine; by host. A compositionally biased stretch (basic and acidic residues) spans 150–168 (GIEDENREMAAHPDKRGED). The segment covering 191–206 (ASNNGRSMEPGSSHSA) has biased composition (polar residues). Phosphoserine; by host occurs at positions 192, 249, 257, and 260. Residues H318, C337, C341, C353, C355, C358, C362, and C365 each contribute to the Zn(2+) site.

It belongs to the paramyxoviruses V protein family. In terms of assembly, interacts with host IFIH1/MDA5 and DHX58/LGP2. Interacts with host IRF3. Interacts with host RIGI regulatory protein (via CARDs domain) and host TRIM25 (via SPRY domain); these interactions prevent TRIM25-mediated ubiquitination of RIG-I and disrupts downstream RIG-I signaling.

Its subcellular location is the host cytoplasm. Functionally, plays an essential role in the inhibition of host immune response. Prevents the establishment of cellular antiviral state by blocking interferon-alpha/beta (IFN-alpha/beta) production and signaling pathway. Interacts with host IFIH1/MDA5 and DHX58/LGP2 to inhibit the transduction pathway involved in the activation of IFN-beta promoter, thus protecting the virus against cell antiviral state. Also interacts with and inhibits host IRF3. Blocks the type I interferon signaling pathway by disrupting the RIG-I signaling pathway. The protein is Protein V (P/V/C) of Sendai virus (strain Z) (SeV).